The primary structure comprises 334 residues: N-acetyl-gamma-glutamyl-phosphate reductase (334 aa).

Cysteine 154 is an active-site residue.

It belongs to the NAGSA dehydrogenase family. Type 1 subfamily.

The protein localises to the cytoplasm. The enzyme catalyses N-acetyl-L-glutamate 5-semialdehyde + phosphate + NADP(+) = N-acetyl-L-glutamyl 5-phosphate + NADPH + H(+). Its pathway is amino-acid biosynthesis; L-arginine biosynthesis; N(2)-acetyl-L-ornithine from L-glutamate: step 3/4. In terms of biological role, catalyzes the NADPH-dependent reduction of N-acetyl-5-glutamyl phosphate to yield N-acetyl-L-glutamate 5-semialdehyde. The protein is N-acetyl-gamma-glutamyl-phosphate reductase of Aliivibrio fischeri (strain ATCC 700601 / ES114) (Vibrio fischeri).